Reading from the N-terminus, the 2374-residue chain is Genome polyprotein (2374 aa).

G115 is lipidated: N-myristoyl glycine; by host. Disordered stretches follow at residues 144–176 (GDMP…GNVV) and 707–739 (GADG…FDYP). Positions 157 to 174 (GSNKGGSSTSPKSTSNGN) are enriched in low complexity. Polar residues predominate over residues 716–728 (APTSDLSDGNPTT). The SF3 helicase domain occupies 1361-1525 (YSTALSAISL…VAFSAAAALQ (165 aa)). 1387 to 1394 (GPPGTGKS) lines the ATP pocket. Residue G1600 is the site of N-myristoyl glycine; by host attachment. Residues 1649–1669 (IFAASSFLSLIAATLTIVRCL) form a helical membrane-spanning segment. The segment at 1677–1699 (GAYSGTPVPKPRKKDLPKQPVYS) is disordered. Y1679 carries the O-(5'-phospho-RNA)-tyrosine modification. The region spanning 1700 to 1889 (GPVRRQGFDP…FSARLTPERV (190 aa)) is the Peptidase C3 domain. Residues H1748, E1779, and C1852 each act as for protease 3C activity in the active site. Residues 2126 to 2243 (SNVWSIDYSC…GSNQDFHPRE (118 aa)) enclose the RdRp catalytic domain. Residues D2132 and D2229 each act as for RdRp activity in the active site.

As to quaternary structure, interacts with capsid protein VP1. Interacts with capsid protein VP3. In terms of assembly, interacts with capsid protein VP0. Interacts with capsid protein VP3. Interacts with capsid protein VP0. Interacts with capsid protein VP1. As to quaternary structure, homodimer. Interacts with protein 2B. Interacts with protein 2C. In terms of assembly, homodimer. Interacts with host ABCD3. Interacts with protein 2A. Interacts with host ACBD3. Homodimer. Interacts with host ABCD3. Interacts with protein 2A. Interacts with protein 3A. Interacts with protein 3C. Interacts with host ACBD3. As to quaternary structure, homodimer. Interacts with host ABCD3 (via GOLD domain) and PI4KB; these interactions allow the formation of a viral protein/ACBD3/PI4KB complex in order to synthesize PI4P at the viral RNA replication sites. Interacts with protein 2C. Interacts with protein 3C. Protein 3C: Interacts with protein 2A. Protein 3C: Interacts with protein 2C. Post-translationally, specific enzymatic cleavages by the viral protease in vivo yield a variety of precursors and mature proteins. The leader protein-VP0 junction is cleaved by 3C proteinase. The VP1/2A junction is cleaved by the protein 3CD in association with protein 2A. Uridylylated by the polymerase and is covalently linked to the 5'-end of genomic RNA. This uridylylated form acts as a nucleotide-peptide primer for the polymerase.

The protein resides in the virion. The protein localises to the host cytoplasm. It localises to the host cytoplasmic vesicle membrane. It is found in the host Golgi apparatus membrane. It catalyses the reaction Selective cleavage of Gln-|-Gly bond in the poliovirus polyprotein. In other picornavirus reactions Glu may be substituted for Gln, and Ser or Thr for Gly.. The catalysed reaction is RNA(n) + a ribonucleoside 5'-triphosphate = RNA(n+1) + diphosphate. It carries out the reaction ATP + H2O = ADP + phosphate + H(+). Its function is as follows. Required for viral RNA replication and viral RNA encapsidation. Does not have any proteolytic activity. In terms of biological role, forms an icosahedral capsid of pseudo T=3 symmetry with capsid proteins VP0 and VP3. Together they form an icosahedral capsid composed of 60 copies of each VP0, VP1, and VP3. All the three latter proteins contain a beta-sheet structure called beta-barrel jelly roll. Functionally, forms an icosahedral capsid of pseudo T=3 symmetry with capsid proteins VP1 and VP3. Together they form an icosahedral capsid composed of 60 copies of each VP0, VP1, and VP3. All the three latter proteins contain a beta-sheet structure called beta-barrel jelly roll. Forms an icosahedral capsid of pseudo T=3 symmetry with capsid proteins VP0 and VP1. Together they form an icosahedral capsid composed of 60 copies of each VP0, VP1, and VP3. All the three latter proteins contain a beta-sheet structure called beta-barrel jelly roll. Its function is as follows. Required for viral RNA replication. Does not have any proteolytic activity. In terms of biological role, affects membrane integrity and causes an increase in membrane permeability. Functionally, induces and associates with structural rearrangements of intracellular membranes. Displays RNA-binding, nucleotide binding and NTPase activities. May play a role in virion morphogenesis and viral RNA encapsidation by interacting with the capsid protein VP3. Serves as membrane anchor via its hydrophobic domain. Plays an essential role in viral RNA replication by recruiting PI4KB at the viral replication sites, thereby allowing the formation of rearranged membranous structures where viral replication takes place. Its function is as follows. Forms a primer, VPg-pU, which is utilized by the polymerase for the initiation of RNA chains. In terms of biological role, cysteine protease that generates mature viral proteins from the precursor polyprotein. In addition to its proteolytic activity, it binds to viral RNA, and thus influences viral genome replication. RNA and substrate cooperatively bind to the protease. Functionally, replicates the genomic and antigenomic RNAs by recognizing replications specific signals. Performs VPg uridylylation. The chain is Genome polyprotein from Salivirus A (isolate Human/Nigeria/NG-J1/2007) (SV-A).